A 279-amino-acid chain; its full sequence is Acyl-coenzyme A thioesterase MBLAC2 (279 aa).

Serine 2 carries the post-translational modification N-acetylserine. 7 residues coordinate Zn(2+): histidine 83, histidine 85, aspartate 87, histidine 88, histidine 170, aspartate 189, and histidine 231. Cysteine 254 is lipidated: S-palmitoyl cysteine.

This sequence belongs to the metallo-beta-lactamase superfamily. Glyoxalase II family. Requires Zn(2+) as cofactor. In terms of processing, palmitoylated on Cys-254 by ZDHHC20.

It localises to the endoplasmic reticulum membrane. Its subcellular location is the cell membrane. It catalyses the reaction hexadecanoyl-CoA + H2O = hexadecanoate + CoA + H(+). It carries out the reaction dodecanoyl-CoA + H2O = dodecanoate + CoA + H(+). The catalysed reaction is tetradecanoyl-CoA + H2O = tetradecanoate + CoA + H(+). The enzyme catalyses octadecanoyl-CoA + H2O = octadecanoate + CoA + H(+). It catalyses the reaction a beta-lactam + H2O = a substituted beta-amino acid. Its function is as follows. Acyl-CoA thioesterases are a group of enzymes that catalyze the hydrolysis of acyl-CoAs to the free fatty acid and coenzyme A (CoASH), providing the potential to regulate intracellular levels of acyl-CoAs, free fatty acids and CoASH. Has an acyl-CoA thioesterase activity towards the long chain fatty acyl-CoA thioester palmitoyl-CoA (hexadecanoyl-CoA; C16:0-CoA). Displays a substrate preference for fatty acyl-CoAs with chain-lengths C12-C18. This is Acyl-coenzyme A thioesterase MBLAC2 (MBLAC2) from Bos taurus (Bovine).